The primary structure comprises 285 residues: Bis(5'-nucleosyl)-tetraphosphatase, symmetrical (285 aa).

The protein belongs to the Ap4A hydrolase family.

It carries out the reaction P(1),P(4)-bis(5'-adenosyl) tetraphosphate + H2O = 2 ADP + 2 H(+). Functionally, hydrolyzes diadenosine 5',5'''-P1,P4-tetraphosphate to yield ADP. This chain is Bis(5'-nucleosyl)-tetraphosphatase, symmetrical, found in Pseudomonas entomophila (strain L48).